The following is a 218-amino-acid chain: Adenylate kinase (218 aa).

Position 10–15 (10–15 (GAGKGT)) interacts with ATP. The NMP stretch occupies residues 30 to 59 (STGDMLRAAVKAGTPLGLEAKKVMDAGGLV). AMP contacts are provided by residues Thr31, Arg36, 57 to 59 (GLV), 85 to 88 (GFPR), and Gln92. The segment at 122-159 (GRRVHPASGRSYHVRFNPPKAEGVDDVTGEPLVQRDDD) is LID. Residues Arg123 and 132–133 (SY) contribute to the ATP site. AMP is bound by residues Arg156 and Arg167. Gly203 is an ATP binding site.

Belongs to the adenylate kinase family. In terms of assembly, monomer.

The protein resides in the cytoplasm. It catalyses the reaction AMP + ATP = 2 ADP. Its pathway is purine metabolism; AMP biosynthesis via salvage pathway; AMP from ADP: step 1/1. Functionally, catalyzes the reversible transfer of the terminal phosphate group between ATP and AMP. Plays an important role in cellular energy homeostasis and in adenine nucleotide metabolism. In Bordetella bronchiseptica (strain ATCC BAA-588 / NCTC 13252 / RB50) (Alcaligenes bronchisepticus), this protein is Adenylate kinase.